A 326-amino-acid chain; its full sequence is MTGIVYKSTGSWYTVKSLQGHFMECRIKGKFRMKGIKSTNPIAVGDVVDYDLDENSDVVTGTITKIHDRKNYIVRKSVNLSHQMHIIASNLDYVFLLITINNPPTTTNFIDRFLVTAQAYGIETILVFNKIDTYNEAMLDEQLFMQYIYQEIGYKCLRVSSTEGKGIEELKNIMKNKVTMFSGHSGVGKSTLVNAMEPTLHLKTKTISEQSKQGQHTTTFAEMYDLSFGAQIIDTPGIKGFGIVDMEKEEISGYFPEFFKLKDQCKFNNCLHKDEPKCAVKDALEKDKISYSRYNSYLKILEGDDETYRTDIYNDDRIASDETRNK.

The CP-type G domain maps to 80 to 241; sequence LSHQMHIIAS…IIDTPGIKGF (162 aa). Residues 129–132 and 183–191 contribute to the GTP site; these read NKID and GHSGVGKST. Cysteine 265, cysteine 270, histidine 272, and cysteine 278 together coordinate Zn(2+).

The protein belongs to the TRAFAC class YlqF/YawG GTPase family. RsgA subfamily. Monomer. Associates with 30S ribosomal subunit, binds 16S rRNA. Zn(2+) is required as a cofactor.

The protein resides in the cytoplasm. Its function is as follows. One of several proteins that assist in the late maturation steps of the functional core of the 30S ribosomal subunit. Helps release RbfA from mature subunits. May play a role in the assembly of ribosomal proteins into the subunit. Circularly permuted GTPase that catalyzes slow GTP hydrolysis, GTPase activity is stimulated by the 30S ribosomal subunit. In Flavobacterium psychrophilum (strain ATCC 49511 / DSM 21280 / CIP 103535 / JIP02/86), this protein is Small ribosomal subunit biogenesis GTPase RsgA.